The following is a 296-amino-acid chain: Acetyl-coenzyme A carboxylase carboxyl transferase subunit beta (296 aa).

Positions 25 to 294 (LWIKDPSTGE…NSDAPAPPEA (270 aa)) constitute a CoA carboxyltransferase N-terminal domain.

Belongs to the AccD/PCCB family. In terms of assembly, acetyl-CoA carboxylase is a heterohexamer composed of biotin carboxyl carrier protein (AccB), biotin carboxylase (AccC) and two subunits each of ACCase subunit alpha (AccA) and ACCase subunit beta (AccD).

The protein localises to the cytoplasm. The catalysed reaction is N(6)-carboxybiotinyl-L-lysyl-[protein] + acetyl-CoA = N(6)-biotinyl-L-lysyl-[protein] + malonyl-CoA. The protein operates within lipid metabolism; malonyl-CoA biosynthesis; malonyl-CoA from acetyl-CoA: step 1/1. Its function is as follows. Component of the acetyl coenzyme A carboxylase (ACC) complex. Biotin carboxylase (BC) catalyzes the carboxylation of biotin on its carrier protein (BCCP) and then the CO(2) group is transferred by the transcarboxylase to acetyl-CoA to form malonyl-CoA. The polypeptide is Acetyl-coenzyme A carboxylase carboxyl transferase subunit beta (Brucella ovis (strain ATCC 25840 / 63/290 / NCTC 10512)).